The following is a 510-amino-acid chain: Probable lysine--tRNA ligase, cytoplasmic (510 aa).

It belongs to the class-II aminoacyl-tRNA synthetase family. As to quaternary structure, homodimer.

The protein resides in the cytoplasm. The enzyme catalyses tRNA(Lys) + L-lysine + ATP = L-lysyl-tRNA(Lys) + AMP + diphosphate. In Encephalitozoon cuniculi (strain GB-M1) (Microsporidian parasite), this protein is Probable lysine--tRNA ligase, cytoplasmic.